The following is a 184-amino-acid chain: Photosystem I assembly protein Ycf4 (184 aa).

Helical transmembrane passes span 22 to 42 (FFWA…GTSS) and 57 to 77 (ILFF…LFIS).

The protein belongs to the Ycf4 family.

The protein resides in the plastid. The protein localises to the chloroplast thylakoid membrane. Seems to be required for the assembly of the photosystem I complex. This is Photosystem I assembly protein Ycf4 from Nandina domestica (Heavenly bamboo).